Consider the following 359-residue polypeptide: Spermine synthase (359 aa).

In terms of domain architecture, PABS spans 53–304 (SGWFSEPHPR…GVIGFVLCST (252 aa)). Residue Q99 coordinates S-adenosyl 3-(methylsulfanyl)propylamine. Y129 contributes to the spermidine binding site. Residue Q130 coordinates S-adenosyl 3-(methylsulfanyl)propylamine. D154 provides a ligand contact to spermidine. S-adenosyl 3-(methylsulfanyl)propylamine contacts are provided by residues E174 and 205–206 (DA). D224 functions as the Proton acceptor in the catalytic mechanism. Putrescine is bound at residue Y292.

Belongs to the spermidine/spermine synthase family. In terms of assembly, heterodimer. Component of a multiprotein complex. Interacts with SPDSYN1 and SPDSYN2. In terms of tissue distribution, expressed predominantly in stem internodes, flower buds and roots.

The enzyme catalyses S-adenosyl 3-(methylsulfanyl)propylamine + spermidine = spermine + S-methyl-5'-thioadenosine + H(+). It functions in the pathway amine and polyamine biosynthesis; spermine biosynthesis; spermine from spermidine: step 1/1. The chain is Spermine synthase (SPMS) from Arabidopsis thaliana (Mouse-ear cress).